Consider the following 275-residue polypeptide: MNSLPRPDIGPFADTPEKRWVGVSFGAAAVGYDGVAALQREVGESLLAGIRHLGPPPARMLDLGAGTGHFSGLLVAAFPTAECLALDIAEGMLRFLRSHRPGADGMGLVVGDAEALPLADESVDLIFSNMAFQWCERLDRAISECCRVLRPGGRLAFSTFGEATLAELRMAWRAVDGYTHVNAFATRRSVEQELRAQGFTKIRLDARTLRRGYPSVLALMKELKALGARNLTRNRPRHLLSRHTLERVSEAYGRLPGMASAVTASFEVLTALVEK.

It belongs to the methyltransferase superfamily.

The enzyme catalyses malonyl-[ACP] + S-adenosyl-L-methionine = malonyl-[ACP] methyl ester + S-adenosyl-L-homocysteine. The protein operates within cofactor biosynthesis; biotin biosynthesis. Functionally, converts the free carboxyl group of a malonyl-thioester to its methyl ester by transfer of a methyl group from S-adenosyl-L-methionine (SAM). It allows to synthesize pimeloyl-ACP via the fatty acid synthetic pathway. This is Malonyl-[acyl-carrier protein] O-methyltransferase from Methylococcus capsulatus (strain ATCC 33009 / NCIMB 11132 / Bath).